Consider the following 1238-residue polypeptide: Protein translocase subunit SecA 1 (1238 aa).

ATP is bound by residues Gln-107, 125-129 (GEGKT), and Asp-570. The tract at residues 1194–1220 (AAGSEGRAEGSVDTVRVEEPRIGRNAP) is disordered. Residues 1199–1215 (GRAEGSVDTVRVEEPRI) are compositionally biased toward basic and acidic residues. Residues Cys-1221, Cys-1223, Cys-1232, and Cys-1233 each coordinate Zn(2+).

It belongs to the SecA family. In terms of assembly, monomer and homodimer. Part of the essential Sec protein translocation apparatus which comprises SecA, SecYEG and auxiliary proteins SecDF. Other proteins may also be involved. Zn(2+) is required as a cofactor.

It is found in the cell inner membrane. Its subcellular location is the cytoplasm. The catalysed reaction is ATP + H2O + cellular proteinSide 1 = ADP + phosphate + cellular proteinSide 2.. Functionally, part of the Sec protein translocase complex. Interacts with the SecYEG preprotein conducting channel. Has a central role in coupling the hydrolysis of ATP to the transfer of proteins into and across the cell membrane, serving as an ATP-driven molecular motor driving the stepwise translocation of polypeptide chains across the membrane. This chain is Protein translocase subunit SecA 1, found in Rhodopirellula baltica (strain DSM 10527 / NCIMB 13988 / SH1).